Consider the following 59-residue polypeptide: Potassium channel toxin alpha-KTx 1.2 (59 aa).

Positions Met-1 to Gly-22 are cleaved as a signal peptide. Gln-23 carries the post-translational modification Pyrrolidone carboxylic acid. 3 disulfide bridges follow: Cys-29–Cys-50, Cys-35–Cys-55, and Cys-39–Cys-57. The tract at residues Gly-48 to Cys-55 is interaction with Ca(2+)-activated K(+) channels.

This sequence belongs to the short scorpion toxin superfamily. Potassium channel inhibitor family. Alpha-KTx 01 subfamily. As to expression, expressed by the venom gland.

It is found in the secreted. In terms of biological role, blocks calcium-activated potassium channels (Kd=43 nM on KCa1.1/KCNMA1). Has a potent presynaptic facilitatory action, with less effect on direct muscle stimulation. The chain is Potassium channel toxin alpha-KTx 1.2 from Leiurus hebraeus (Hebrew deathstalker scorpion).